The sequence spans 142 residues: Large ribosomal subunit protein uL13 (142 aa).

The protein belongs to the universal ribosomal protein uL13 family. As to quaternary structure, part of the 50S ribosomal subunit.

Functionally, this protein is one of the early assembly proteins of the 50S ribosomal subunit, although it is not seen to bind rRNA by itself. It is important during the early stages of 50S assembly. This is Large ribosomal subunit protein uL13 from Stenotrophomonas maltophilia (strain R551-3).